Reading from the N-terminus, the 417-residue chain is Gamma-glutamyl phosphate reductase (417 aa).

Belongs to the gamma-glutamyl phosphate reductase family.

Its subcellular location is the cytoplasm. The catalysed reaction is L-glutamate 5-semialdehyde + phosphate + NADP(+) = L-glutamyl 5-phosphate + NADPH + H(+). It functions in the pathway amino-acid biosynthesis; L-proline biosynthesis; L-glutamate 5-semialdehyde from L-glutamate: step 2/2. In terms of biological role, catalyzes the NADPH-dependent reduction of L-glutamate 5-phosphate into L-glutamate 5-semialdehyde and phosphate. The product spontaneously undergoes cyclization to form 1-pyrroline-5-carboxylate. This chain is Gamma-glutamyl phosphate reductase, found in Haemophilus influenzae (strain PittGG).